Consider the following 502-residue polypeptide: ATP synthase subunit alpha (502 aa).

169-176 contributes to the ATP binding site; sequence GDRQTGKT.

Belongs to the ATPase alpha/beta chains family. F-type ATPases have 2 components, CF(1) - the catalytic core - and CF(0) - the membrane proton channel. CF(1) has five subunits: alpha(3), beta(3), gamma(1), delta(1), epsilon(1). CF(0) has three main subunits: a(1), b(2) and c(9-12). The alpha and beta chains form an alternating ring which encloses part of the gamma chain. CF(1) is attached to CF(0) by a central stalk formed by the gamma and epsilon chains, while a peripheral stalk is formed by the delta and b chains.

Its subcellular location is the cell membrane. It carries out the reaction ATP + H2O + 4 H(+)(in) = ADP + phosphate + 5 H(+)(out). In terms of biological role, produces ATP from ADP in the presence of a proton gradient across the membrane. The alpha chain is a regulatory subunit. This is ATP synthase subunit alpha from Bacillus pumilus (strain SAFR-032).